Reading from the N-terminus, the 567-residue chain is MKISRDAYANMYGPTVGDRIRLGDTELWIEIEKDHTHYGEEVVFGGGKVIRDGMGQSQLCSDSVMDTVITNVIIIDWWGIVKADVGLKDGRIVAIGKAGNPDTQPDVDIIIGAGTEIIAGENQILTAGAVDTHVHYICPQQVDEALMSGLTTMIGGGTGPATGSVATTNTPGPWHIGKMMQAVDDLPINIGFLGKGSASTPAALEEQVKAGVMSLKVHEDWAATPATIGNALDVADRYDIQVALHADSLNESGFVKDTLEAFKDRCIHSYHTEGAGGGHAPDIIVACGQPNVLPSSTNPTRPYTINTVDEHLDMLMECHHLDPNIPEDVAFADSRIRRETIAAEDILHDLGAISMISSDSQAMGRIGEVVCRTWQTAHKMRLQRGLLPEDQERGTDNFRVKRYIAKYTINPAITHGVSHEVGSVEIGKMADLVLWRPKFFGVKPSIILKGGMIAGAAMGDPNAAISTPQPVHYRRMFGALGRAVSATRVTFVSQAAMDTGLEEKLGLRSRLVACKNVRSMRKKDMKLNDYCPNITVDPETYEVRVDGVLLTCEPLSELPLAQLYHLF.

One can recognise a Urease domain in the interval 128-567; the sequence is GAVDTHVHYI…LPLAQLYHLF (440 aa). The Ni(2+) site is built by histidine 133, histidine 135, and lysine 216. Lysine 216 is modified (N6-carboxylysine). A substrate-binding site is contributed by histidine 218. The Ni(2+) site is built by histidine 245 and histidine 271. Histidine 319 serves as the catalytic Proton donor. Aspartate 359 serves as a coordination point for Ni(2+).

This sequence belongs to the metallo-dependent hydrolases superfamily. Urease alpha subunit family. As to quaternary structure, heterotrimer of UreA (gamma), UreB (beta) and UreC (alpha) subunits. Three heterotrimers associate to form the active enzyme. It depends on Ni cation as a cofactor. Carboxylation allows a single lysine to coordinate two nickel ions.

It localises to the cytoplasm. The enzyme catalyses urea + 2 H2O + H(+) = hydrogencarbonate + 2 NH4(+). Its pathway is nitrogen metabolism; urea degradation; CO(2) and NH(3) from urea (urease route): step 1/1. The chain is Urease subunit alpha 1 from Psychrobacter cryohalolentis (strain ATCC BAA-1226 / DSM 17306 / VKM B-2378 / K5).